We begin with the raw amino-acid sequence, 81 residues long: D-alanyl carrier protein (81 aa).

The region spanning 1–81 (MADEAIKNGV…KIIAKVEQAQ (81 aa)) is the Carrier domain. An O-(pantetheine 4'-phosphoryl)serine modification is found at serine 39.

It belongs to the DltC family. Post-translationally, 4'-phosphopantetheine is transferred from CoA to a specific serine of apo-DCP.

It localises to the cytoplasm. The protein operates within cell wall biogenesis; lipoteichoic acid biosynthesis. In terms of biological role, carrier protein involved in the D-alanylation of lipoteichoic acid (LTA). The loading of thioester-linked D-alanine onto DltC is catalyzed by D-alanine--D-alanyl carrier protein ligase DltA. The DltC-carried D-alanyl group is further transferred to cell membrane phosphatidylglycerol (PG) by forming an ester bond, probably catalyzed by DltD. D-alanylation of LTA plays an important role in modulating the properties of the cell wall in Gram-positive bacteria, influencing the net charge of the cell wall. This is D-alanyl carrier protein from Lacticaseibacillus rhamnosus (Lactobacillus rhamnosus).